A 732-amino-acid polypeptide reads, in one-letter code: Engulfment and cell motility protein 2 (732 aa).

Y48 is subject to Phosphotyrosine. Residues 323-497 (AQRDIIFELR…VVREQITRAL (175 aa)) form the ELMO domain. A Phosphoserine modification is found at S515. The region spanning 565 to 686 (SSFRKIGNRR…LLGKDMSSEL (122 aa)) is the PH domain. An SH3-binding motif is present at residues 712–719 (PEAPPPVP). The residue at position 729 (Y729) is a Phosphotyrosine.

In terms of assembly, interacts directly with the SH3-domain of DOCK1 via its SH3-binding site. Probably forms a heterotrimeric complex with DOCK1 and RAC1. Interacts with ARHGEF16, DOCK4 and EPHA2; mediates activation of RAC1 by EPHA2. Interacts with ADGRB3. Interacts with AUTS2; the interaction is direct.

The protein resides in the cytoplasm. It is found in the cytosol. It localises to the membrane. In terms of biological role, involved in cytoskeletal rearrangements required for phagocytosis of apoptotic cells and cell motility. Acts in association with DOCK1 and CRK. Was initially proposed to be required in complex with DOCK1 to activate Rac Rho small GTPases. May enhance the guanine nucleotide exchange factor (GEF) activity of DOCK1. The polypeptide is Engulfment and cell motility protein 2 (Elmo2) (Mus musculus (Mouse)).